A 33-amino-acid chain; its full sequence is Cytochrome b6-f complex subunit 8 (33 aa).

A helical transmembrane segment spans residues 2–22 (LFTVAWASLAAMFSFSIAMVV).

It belongs to the PetN family. In terms of assembly, the 4 large subunits of the cytochrome b6-f complex are cytochrome b6, subunit IV (17 kDa polypeptide, PetD), cytochrome f and the Rieske protein, while the 4 small subunits are PetG, PetL, PetM and PetN. The complex functions as a dimer.

Its subcellular location is the cellular thylakoid membrane. Functionally, component of the cytochrome b6-f complex, which mediates electron transfer between photosystem II (PSII) and photosystem I (PSI), cyclic electron flow around PSI, and state transitions. The chain is Cytochrome b6-f complex subunit 8 from Synechococcus sp. (strain CC9902).